We begin with the raw amino-acid sequence, 501 residues long: MAEHFTDEEIWFVTGSQSLYGQEILDQVAEQSRALAERLDASADLPVAVRWKPVVTTSEAILDVLRDASSSPQCVGVITWMHTFSPAKMWIRGLSALQKPMLHLHTQFGVEIPWDTIDMDFMNLNQAAHGDREFGYIQTRLSVPRTTVAGHVGDPRTTARIGSWMRAALGAAELRSLRIARFGDNMRDVAVTEGDKVEAESHFGVSVNTYSVNDLAKAVYDVSDPEIDKLVQEYEDTYAVAEELRRGGERHASLREGARIELGLRHFLADGFGAFTTNFEDLGDLRQLPGLAVQRLMADGFGFGAEGDWKTSAMVRTVKTMGVGLPGGTSFMEDYTYDLTPGSERILGAHMLEVCPSIAGQTPSLEVHPLGIGNREDPVRLRFTAAPGSGVVLGICDMGSRFRLVANHVTVVEPSAPLPNLPVACAVWEPEPSWSTSTEAWLMAGGPHHTVLTTAVSPTTLDDFATITGTELLQIDQHTTPREFQREMRWNAVYHHIAAGL.

Residues E306, E333, H350, and H449 each contribute to the Mn(2+) site.

This sequence belongs to the arabinose isomerase family. It depends on Mn(2+) as a cofactor.

It carries out the reaction beta-L-arabinopyranose = L-ribulose. It functions in the pathway carbohydrate degradation; L-arabinose degradation via L-ribulose; D-xylulose 5-phosphate from L-arabinose (bacterial route): step 1/3. Functionally, catalyzes the conversion of L-arabinose to L-ribulose. The chain is L-arabinose isomerase from Mycolicibacterium smegmatis (strain ATCC 700084 / mc(2)155) (Mycobacterium smegmatis).